Reading from the N-terminus, the 303-residue chain is Diaminopimelate epimerase (303 aa).

Residues Asn15, Gln47, and Asn67 each contribute to the substrate site. The active-site Proton donor is the Cys76. Substrate contacts are provided by residues 77–78, Asn163, Asn197, and 215–216; these read GN and ER. Cys224 serves as the catalytic Proton acceptor. 225–226 provides a ligand contact to substrate; it reads GS. Positions 278-303 are disordered; that stretch reads FDPATGEWSRDTQGLQGSGNADRGAA.

The protein belongs to the diaminopimelate epimerase family. Homodimer.

Its subcellular location is the cytoplasm. It carries out the reaction (2S,6S)-2,6-diaminopimelate = meso-2,6-diaminopimelate. It functions in the pathway amino-acid biosynthesis; L-lysine biosynthesis via DAP pathway; DL-2,6-diaminopimelate from LL-2,6-diaminopimelate: step 1/1. Its function is as follows. Catalyzes the stereoinversion of LL-2,6-diaminopimelate (L,L-DAP) to meso-diaminopimelate (meso-DAP), a precursor of L-lysine and an essential component of the bacterial peptidoglycan. The polypeptide is Diaminopimelate epimerase (Brucella abortus (strain S19)).